A 370-amino-acid chain; its full sequence is tRNA-specific 2-thiouridylase MnmA (370 aa).

ATP is bound by residues 9-16 (GLSGGVDS) and Met-35. Residues 95 to 97 (NPD) form an interaction with target base in tRNA region. The Nucleophile role is filled by Cys-100. The cysteines at positions 100 and 198 are disulfide-linked. Gly-124 is an ATP binding site. The tract at residues 148–150 (KDQ) is interaction with tRNA. Cys-198 acts as the Cysteine persulfide intermediate in catalysis. Residues 316 to 317 (RY) form an interaction with tRNA region.

It belongs to the MnmA/TRMU family.

The protein resides in the cytoplasm. The catalysed reaction is S-sulfanyl-L-cysteinyl-[protein] + uridine(34) in tRNA + AH2 + ATP = 2-thiouridine(34) in tRNA + L-cysteinyl-[protein] + A + AMP + diphosphate + H(+). Functionally, catalyzes the 2-thiolation of uridine at the wobble position (U34) of tRNA, leading to the formation of s(2)U34. This Acidovorax ebreus (strain TPSY) (Diaphorobacter sp. (strain TPSY)) protein is tRNA-specific 2-thiouridylase MnmA.